The sequence spans 474 residues: Probable multidrug resistance protein NorM (474 aa).

The next 12 membrane-spanning stretches (helical) occupy residues 33 to 50 (LWLAWPMALTQLGQIAMM), 65 to 87 (VAAAALAHFVLFSTFTMGLGLVS), 108 to 130 (SLRVGLWAGVIAGVPLTLGQLYG), 150 to 172 (YLDGLAWSLVPGWLFIALRGLMG), 179 to 201 (PALWIMLTAIPINLGLAYVLIHG), 211 to 233 (FGAGLATSIVSWAMCIAAAVVCV), 258 to 280 (LLQLGLPISGASVLEYGVFGAAA), 295 to 317 (QIALQVAAIMFMVPMGISVAATV), 334 to 356 (AGFAAIGLGFVFMAAMTLLVALT), 376 to 398 (TLTAALLIVGASFFIADGLQVVA), 410 to 432 (VPLLFAVLGFWVIGFPFCWVLGF), and 436 to 458 (LGPFGVWIGLAVGLVVYAALLVW).

Belongs to the multi antimicrobial extrusion (MATE) (TC 2.A.66.1) family.

Its subcellular location is the cell inner membrane. Its function is as follows. Multidrug efflux pump. The sequence is that of Probable multidrug resistance protein NorM (norM) from Rhodopseudomonas palustris (strain ATCC BAA-98 / CGA009).